The chain runs to 209 residues: Large ribosomal subunit protein uL3 (209 aa).

The segment at 133-153 is disordered; sequence THGNSLSHRVPGSIGQNQTPG. An N5-methylglutamine modification is found at Q150.

This sequence belongs to the universal ribosomal protein uL3 family. As to quaternary structure, part of the 50S ribosomal subunit. Forms a cluster with proteins L14 and L19. Post-translationally, methylated by PrmB.

One of the primary rRNA binding proteins, it binds directly near the 3'-end of the 23S rRNA, where it nucleates assembly of the 50S subunit. The polypeptide is Large ribosomal subunit protein uL3 (Pectobacterium carotovorum subsp. carotovorum (strain PC1)).